The sequence spans 158 residues: Phosphopantetheine adenylyltransferase (158 aa).

Threonine 10 is a binding site for substrate. Residues 10 to 11 (TF) and histidine 18 each bind ATP. Residues lysine 42, leucine 74, and arginine 88 each contribute to the substrate site. ATP is bound by residues 89–91 (GLR), glutamate 99, and 124–130 (NSFISST).

It belongs to the bacterial CoaD family. In terms of assembly, homohexamer. The cofactor is Mg(2+).

It localises to the cytoplasm. It catalyses the reaction (R)-4'-phosphopantetheine + ATP + H(+) = 3'-dephospho-CoA + diphosphate. It functions in the pathway cofactor biosynthesis; coenzyme A biosynthesis; CoA from (R)-pantothenate: step 4/5. Reversibly transfers an adenylyl group from ATP to 4'-phosphopantetheine, yielding dephospho-CoA (dPCoA) and pyrophosphate. The chain is Phosphopantetheine adenylyltransferase from Shewanella sediminis (strain HAW-EB3).